The primary structure comprises 167 residues: Putative C-type lectin protein FPV008/FPV253 (167 aa).

Positions 49–152 (CPDEWIGYNS…SCIFHERTIC (104 aa)) constitute a C-type lectin domain. Intrachain disulfides connect Cys77/Cys152 and Cys131/Cys144.

In Vertebrata (FPV), this protein is Putative C-type lectin protein FPV008/FPV253.